The primary structure comprises 313 residues: MKWIEIKIKTTEEACDAISYMLTSIGAGGVAIEDPNEIRRETQKSNSIDYVDDEFLNSLGEDVVVKAYFPGETNVPELVSLIKEKLAFIGTFLNVGEGYCGYAEMDEEDWSNSWKKYYKPLHLTDRLIVKPSWENYDNKDGEIIIEMNPGMAFGTGTHETTKMCAVLLDKYVKDGCRVIDVGCGTGILSIIASKLGAAEVTAVDIDEVAVKVAKENLELNKVDNVRVFKGVLDDIEKEKRDIVVANIIANVIMDISSRVPYYLKKDGLFIASGIIKERKQEVLDECLRKGFECVEIIEMGEWVAIVLRCLDSL.

S-adenosyl-L-methionine-binding residues include Thr-161, Gly-182, Asp-204, and Asn-246.

The protein belongs to the methyltransferase superfamily. PrmA family.

Its subcellular location is the cytoplasm. The enzyme catalyses L-lysyl-[protein] + 3 S-adenosyl-L-methionine = N(6),N(6),N(6)-trimethyl-L-lysyl-[protein] + 3 S-adenosyl-L-homocysteine + 3 H(+). In terms of biological role, methylates ribosomal protein L11. This Acetivibrio thermocellus (strain ATCC 27405 / DSM 1237 / JCM 9322 / NBRC 103400 / NCIMB 10682 / NRRL B-4536 / VPI 7372) (Clostridium thermocellum) protein is Ribosomal protein L11 methyltransferase.